Here is a 229-residue protein sequence, read N- to C-terminus: 5'-methylthioadenosine/S-adenosylhomocysteine nucleosidase (229 aa).

The active-site Proton acceptor is Glu-12. Substrate is bound by residues Gly-78, Ile-152, and 173-174 (ME). Catalysis depends on Asp-197, which acts as the Proton donor.

It belongs to the PNP/UDP phosphorylase family. MtnN subfamily.

The catalysed reaction is S-adenosyl-L-homocysteine + H2O = S-(5-deoxy-D-ribos-5-yl)-L-homocysteine + adenine. It carries out the reaction S-methyl-5'-thioadenosine + H2O = 5-(methylsulfanyl)-D-ribose + adenine. It catalyses the reaction 5'-deoxyadenosine + H2O = 5-deoxy-D-ribose + adenine. It participates in amino-acid biosynthesis; L-methionine biosynthesis via salvage pathway; S-methyl-5-thio-alpha-D-ribose 1-phosphate from S-methyl-5'-thioadenosine (hydrolase route): step 1/2. Its function is as follows. Catalyzes the irreversible cleavage of the glycosidic bond in both 5'-methylthioadenosine (MTA) and S-adenosylhomocysteine (SAH/AdoHcy) to adenine and the corresponding thioribose, 5'-methylthioribose and S-ribosylhomocysteine, respectively. Also cleaves 5'-deoxyadenosine, a toxic by-product of radical S-adenosylmethionine (SAM) enzymes, into 5-deoxyribose and adenine. The chain is 5'-methylthioadenosine/S-adenosylhomocysteine nucleosidase from Histophilus somni (strain 129Pt) (Haemophilus somnus).